The following is a 132-amino-acid chain: Small ribosomal subunit protein uS8c (132 aa).

It belongs to the universal ribosomal protein uS8 family. In terms of assembly, part of the 30S ribosomal subunit.

It is found in the plastid. The protein localises to the chloroplast. One of the primary rRNA binding proteins, it binds directly to 16S rRNA central domain where it helps coordinate assembly of the platform of the 30S subunit. The sequence is that of Small ribosomal subunit protein uS8c (rps8) from Amborella trichopoda.